The sequence spans 145 residues: Basic phospholipase A2 P'513 (145 aa).

The first 21 residues, 1–21 (MYPAHLLLLLAVCVSLLGASA), serve as a signal peptide directing secretion. The propeptide occupies 22 to 27 (IPPLPL). Disulfide bonds link C38–C98, C54–C144, C56–C72, C71–C125, C78–C118, C87–C111, and C105–C116. Positions 55, 57, and 59 each coordinate Ca(2+). The active site involves H75. Ca(2+) is bound at residue D76. Residue D119 is part of the active site.

Belongs to the phospholipase A2 family. Group I subfamily. D49 sub-subfamily. The cofactor is Ca(2+). Expressed by the venom gland.

The protein resides in the secreted. It carries out the reaction a 1,2-diacyl-sn-glycero-3-phosphocholine + H2O = a 1-acyl-sn-glycero-3-phosphocholine + a fatty acid + H(+). Functionally, PLA2 catalyzes the calcium-dependent hydrolysis of the 2-acyl groups in 3-sn-phosphoglycerides. This Laticauda laticaudata (Blue-ringed sea krait) protein is Basic phospholipase A2 P'513.